A 239-amino-acid polypeptide reads, in one-letter code: Uridylate kinase (239 aa).

10–13 lines the ATP pocket; the sequence is KLSG. The segment at 18 to 23 is involved in allosteric activation by GTP; the sequence is GEQGYG. Residue G52 coordinates UMP. The ATP site is built by G53 and R57. Residues D72 and 133–140 each bind UMP; that span reads TGNPYFST. The ATP site is built by N161, Y167, and E170.

This sequence belongs to the UMP kinase family. Homohexamer.

The protein resides in the cytoplasm. It carries out the reaction UMP + ATP = UDP + ADP. The protein operates within pyrimidine metabolism; CTP biosynthesis via de novo pathway; UDP from UMP (UMPK route): step 1/1. With respect to regulation, allosterically activated by GTP. Inhibited by UTP. Catalyzes the reversible phosphorylation of UMP to UDP. The protein is Uridylate kinase of Halalkalibacterium halodurans (strain ATCC BAA-125 / DSM 18197 / FERM 7344 / JCM 9153 / C-125) (Bacillus halodurans).